The following is a 406-amino-acid chain: Kelch domain-containing protein 2 (406 aa).

Kelch repeat units follow at residues Glu31 to Gly85, Ser92 to Asp136, Leu148 to Gln207, His221 to Ile259, His271 to Asn311, and His322 to Val359.

As to quaternary structure, component of a CRL2(KLHDC2) E3 ubiquitin-protein ligase complex, also named ECS(KLHDC2) complex, composed of CUL2, Elongin BC (ELOB and ELOC), RBX1 and substrate-specific adapter KLHDC2. May form oligomers as a KLHDC2-ELOB-ELOC complex; this interaction is autoinhibitory for the E3 ligase complex as the substrate-binding site of KLHDC2 is blocked in the oligomer. Interacts with CREB3; interaction is direct and specific as it does not interact with CREB1, ATF4, ATF6, JUN, FOS, CEBPA or herpes simplex virus transactivator VP16. Autoubiquitinated by the CRL2(KLHDC2) E3 ligase complex.

Its subcellular location is the nucleus. It functions in the pathway protein modification; protein ubiquitination. In terms of biological role, substrate-recognition component of a Cul2-RING (CRL2) E3 ubiquitin-protein ligase complex of the DesCEND (destruction via C-end degrons) pathway, which recognizes a C-degron located at the extreme C terminus of target proteins, leading to their ubiquitination and degradation. The C-degron recognized by the DesCEND pathway is usually a motif of less than ten residues and can be present in full-length proteins, truncated proteins or proteolytically cleaved forms. The CRL2(KLHDC2) complex specifically recognizes proteins with a diglycine (Gly-Gly) at the C-terminus, leading to their ubiquitination and degradation. The CRL2(KLHDC2) complex mediates ubiquitination and degradation of truncated SELENOK and SELENOS selenoproteins produced by failed UGA/Sec decoding, which end with a diglycine. The CRL2(KLHDC2) complex also recognizes proteolytically cleaved proteins ending with Gly-Gly, such as the N-terminal fragment of USP1, leading to their degradation. May also act as an indirect repressor of CREB3-mediated transcription by interfering with CREB3-DNA-binding. This chain is Kelch domain-containing protein 2, found in Rattus norvegicus (Rat).